Reading from the N-terminus, the 479-residue chain is Mitochondria-eating protein (479 aa).

Coiled-coil stretches lie at residues 109–161 and 187–223; these read ERKL…LATT and LRRL…RIAR. Disordered stretches follow at residues 220-251 and 456-479; these read RIAR…GRAR and RSRS…SRSR. A compositionally biased stretch (low complexity) spans 235-249; the sequence is RSPSPLPLRSCSPGR.

This sequence belongs to the MIEAP family.

The protein localises to the cytoplasm. Its subcellular location is the cytosol. The protein resides in the mitochondrion outer membrane. It is found in the mitochondrion matrix. Its function is as follows. Key regulator of mitochondrial quality that mediates the repairing or degradation of unhealthy mitochondria in response to mitochondrial damage. Mediator of mitochondrial protein catabolic process (also named MALM) by mediating the degradation of damaged proteins inside mitochondria by promoting the accumulation in the mitochondrial matrix of hydrolases that are characteristic of the lysosomal lumen. Also involved in mitochondrion degradation of damaged mitochondria by promoting the formation of vacuole-like structures (named MIV), which engulf and degrade unhealthy mitochondria by accumulating lysosomes. Binds cardiolipin. May form molecular condensates (non-membrane-bounded organelles) within mitochondria that compartmentalize and promote cardiolipin metabolism. In Gallus gallus (Chicken), this protein is Mitochondria-eating protein (SPATA18).